The sequence spans 239 residues: Sugar fermentation stimulation protein homolog (239 aa).

The protein belongs to the SfsA family.

The sequence is that of Sugar fermentation stimulation protein homolog from Microcystis aeruginosa (strain NIES-843 / IAM M-2473).